A 164-amino-acid polypeptide reads, in one-letter code: Putative protein ZNF321 (164 aa).

This Homo sapiens (Human) protein is Putative protein ZNF321 (ZNF321P).